A 325-amino-acid chain; its full sequence is MGANAGRRSRSPERLRLPVCFLGVFACYFYYGILQESITRGKYGDGARQEKFTFALSLVFIQCVINAAFAKLLIRFFDSVRADRTHSWLYAACSLSYLGAMVSSNSALQFVNYPTQVLGKSCKPIPVMLLGVTVLRKKYPLAKYLCVLLIVTGVALFMYKPKKGAGGDDHIFGYGELLLLLSLTLDGLTGVSQDHMRAHYQTGSNHMMLNVNLWSTLFLGAGILFTGELWEFLSFTERYPSIIYNILLFGLTSALGQSFIFMTVVYFGPLTCSIITTTRKFFTILASVILFANPISTMQWVGTVLVFLGLGLDAKFGKGVKKTSH.

The next 8 helical transmembrane spans lie at 18 to 38 (PVCF…QESI), 54 to 74 (FALS…KLLI), 88 to 108 (WLYA…NSAL), 139 to 159 (YPLA…LFMY), 171 to 191 (IFGY…LTGV), 213 to 233 (LWST…WEFL), 246 to 266 (ILLF…TVVY), and 288 to 308 (VILF…LVFL). The Di-lysine motif motif lies at 321–325 (KKTSH).

It belongs to the nucleotide-sugar transporter family. SLC35B subfamily.

It is found in the endoplasmic reticulum membrane. Probable sugar transporter. This is Solute carrier family 35 member B1 (SLC35B1) from Gallus gallus (Chicken).